The chain runs to 187 residues: Phosphatidylethanolamine-binding protein 1 (187 aa).

At Ser13 the chain carries Phosphoserine. Phosphothreonine is present on Thr42. 3 positions are modified to phosphoserine: Ser52, Ser98, and Ser153. The interval 93–134 (KGNDISSGTVLSDYVGSGPPKGTGLHRYVWLVYEQSGPLKCD) is interaction with RAF1.

This sequence belongs to the phosphatidylethanolamine-binding protein family. In terms of assembly, has a tendency to form dimers by disulfide cross-linking. Interacts with RAF1 and this interaction is enhanced if RAF1 is phosphorylated on residues 'Ser-338', 'Ser-339', 'Tyr-340' and 'Tyr-341'. Interacts with ALOX15; in response to IL13/interleukin-13, prevents the interaction of PEBP1 with RAF1 to activate the ERK signaling cascade.

The protein resides in the cytoplasm. In terms of biological role, binds ATP, opioids and phosphatidylethanolamine. Has lower affinity for phosphatidylinositol and phosphatidylcholine. Serine protease inhibitor which inhibits thrombin, neuropsin and chymotrypsin but not trypsin, tissue type plasminogen activator and elastase. Involved in the positive regulation of epithelial cell migration. Inhibits the kinase activity of RAF1 by inhibiting its activation and by dissociating the RAF1/MEK complex and acting as a competitive inhibitor of MEK phosphorylation. Its function is as follows. HCNP may be involved in the function of the presynaptic cholinergic neurons of the central nervous system. HCNP increases the production of choline acetyltransferase but not acetylcholinesterase. Seems to be mediated by a specific receptor. This Canis lupus familiaris (Dog) protein is Phosphatidylethanolamine-binding protein 1 (PEBP1).